Consider the following 470-residue polypeptide: Glutamate--tRNA ligase 1 (470 aa).

The 'HIGH' region signature appears at 15 to 25; that stretch reads PSPTGTMHIGT. The 'KMSKS' region motif lies at 241-245; that stretch reads KLSKR. An ATP-binding site is contributed by Lys-244.

It belongs to the class-I aminoacyl-tRNA synthetase family. Glutamate--tRNA ligase type 1 subfamily. Monomer.

Its subcellular location is the cytoplasm. The catalysed reaction is tRNA(Glu) + L-glutamate + ATP = L-glutamyl-tRNA(Glu) + AMP + diphosphate. Functionally, catalyzes the attachment of glutamate to tRNA(Glu) in a two-step reaction: glutamate is first activated by ATP to form Glu-AMP and then transferred to the acceptor end of tRNA(Glu). The polypeptide is Glutamate--tRNA ligase 1 (Jannaschia sp. (strain CCS1)).